The primary structure comprises 1159 residues: Anillin-like protein 1 (1159 aa).

Disordered regions lie at residues 43-81, 266-327, 409-430, 549-608, and 629-699; these read VASPTKVFGSSSKCNDGPSTPVHFHPQEPKETTPNMKEN, QQVS…TKTT, KLKKSSSANVTAPPAPTSAPVP, AIPK…GDVI, and FGFM…KSSS. Over residues 50–60 the composition is skewed to polar residues; it reads FGSSSKCNDGP. Positions 287–327 are enriched in low complexity; that stretch reads ASSATSSSSSTTTLTTISGASGSTTSGISNAPQDSASTKTT. Positions 421–430 are enriched in pro residues; it reads PPAPTSAPVP. The segment covering 564–584 has biased composition (polar residues); that stretch reads SASSLYSQGARSNTASPASKS. A compositionally biased stretch (acidic residues) spans 660–684; it reads VIEEETENEDESEPYEPEEEEDDDA. The region spanning 1029–1147 is the PH domain; that stretch reads DITYHGFLSM…WLSLINSTSK (119 aa).

As to expression, strongly expressed in dividing neuroblasts under the ventral epidermal cells during ventral enclosure.

The protein localises to the cytoplasm. It is found in the cell cortex. It localises to the cytoskeleton. Its subcellular location is the spindle. The protein resides in the midbody. The protein localises to the cleavage furrow. Required for contractile events in embryos that occur prior to mitosis, such as cortical ruffling and pseudocleavage. Promotes membrane ruffling by organizing cortical patches of septins and myosin II. Not generally required for cytokinesis in mitotic cells. Required for the asymmetric cleavage events that extrude the two polar bodies during oocyte meiosis. Not required for meiotic contractile ring assembly, initiation or closure but is required for the transformation of the contractile ring from a disk above the spindle to a tube around the spindle midzone. Promotes astral microtubule-directed cortical myosin polarization and cleavage furrow ingression. Regulates neuroblast cytokinesis during mid- to late-embryogenesis and is required for ventral enclosure. The protein is Anillin-like protein 1 (ani-1) of Caenorhabditis elegans.